Consider the following 286-residue polypeptide: Bifunctional protein FolD (286 aa).

Residues 164–166, Ser193, and Ile234 contribute to the NADP(+) site; that span reads GRS.

The protein belongs to the tetrahydrofolate dehydrogenase/cyclohydrolase family. In terms of assembly, homodimer.

The enzyme catalyses (6R)-5,10-methylene-5,6,7,8-tetrahydrofolate + NADP(+) = (6R)-5,10-methenyltetrahydrofolate + NADPH. It carries out the reaction (6R)-5,10-methenyltetrahydrofolate + H2O = (6R)-10-formyltetrahydrofolate + H(+). The protein operates within one-carbon metabolism; tetrahydrofolate interconversion. In terms of biological role, catalyzes the oxidation of 5,10-methylenetetrahydrofolate to 5,10-methenyltetrahydrofolate and then the hydrolysis of 5,10-methenyltetrahydrofolate to 10-formyltetrahydrofolate. This is Bifunctional protein FolD from Maridesulfovibrio salexigens (strain ATCC 14822 / DSM 2638 / NCIMB 8403 / VKM B-1763) (Desulfovibrio salexigens).